The primary structure comprises 508 residues: Endo-4-O-sulfatase (508 aa).

Ser-84 carries the post-translational modification 3-oxoalanine (Ser).

Belongs to the sulfatase family. Post-translationally, the conversion to 3-oxoalanine (also known as C-formylglycine, FGly), of a serine or cysteine residue in prokaryotes and of a cysteine residue in eukaryotes, is critical for catalytic activity.

In terms of biological role, endosulfatase involved in the degradation of the glycosaminoglycans (GAGs) chondroitin sulfate (CS) and dermatan sulfate (DS). Efficiently hydrolyzes sulfate groups from a broad range of substrate size, including disaccharide to high molecular weight CS and DS polymers. Has a strict specificity for the 4-O-sulfate groups of galactosamine. GAG-specific sulfatases play a key role in the persistence of the major human gut symbiont B.thetaiotaomicron in the host gastrointestinal tract. This chain is Endo-4-O-sulfatase, found in Bacteroides thetaiotaomicron (strain ATCC 29148 / DSM 2079 / JCM 5827 / CCUG 10774 / NCTC 10582 / VPI-5482 / E50).